Here is an 89-residue protein sequence, read N- to C-terminus: FMRFamide-like neuropeptides 19 (89 aa).

Residues 1 to 20 (MSFQLTLFSMLFLLIAVVVG) form the signal peptide. Positions 21–67 (QPIQSQNGDLKMQAVQDNSPLNMEAFNDDSALYDYLEQSDPSLKSME) are excised as a propeptide. At Phe76 the chain carries Phenylalanine amide. A propeptide spanning residues 80–89 (ASWASSVRFG) is cleaved from the precursor.

It belongs to the FARP (FMRFamide related peptide) family. Each flp gene is expressed in a distinct set of neurons. Flp-19 is expressed in the URX interneurons, the serotonin and acetylcholine-expressing HSN neurons, and the AIN, AWA and BAG neurons.

The protein localises to the secreted. In terms of biological role, FMRFamides and FMRFamide-like peptides are neuropeptides. WANQVRF-amide inhibits the activity of dissected pharyngeal myogenic muscle system. This Caenorhabditis elegans protein is FMRFamide-like neuropeptides 19.